The primary structure comprises 210 residues: Probable glutathione peroxidase 8 (210 aa).

The helical transmembrane segment at 13–35 threads the bilayer; that stretch reads ASRAGLFKVLLSVALCMGSLYLL.

It belongs to the glutathione peroxidase family.

Its subcellular location is the membrane. It carries out the reaction 2 glutathione + H2O2 = glutathione disulfide + 2 H2O. This Danio rerio (Zebrafish) protein is Probable glutathione peroxidase 8 (gpx8).